A 771-amino-acid chain; its full sequence is MANSSLLRVVLVALLLLGSVTVSAGDGRGTPIAFQAEVSKMLDILVNSLYTNRAVFLRELISNGSDALDKIRVLYLTSPKEPLTKDGEAPTMDLRISFDKEKSELILRDGGVGMTKEELAKHLGSLGTSGTKHFLEKLQEGVGAGGGDQNNLIGQFGVGFYSVFLVGDRVRVASKSDDSDEQYVWESKGDGQYFLYPDPRGNTLGRGTEITIELKPDAEQFLSAETIKKTIHQYSEFINFPIYVQEEVEVASTAATPEPAAEEGSLDEGAVEEDPDKEGDTQGVVKERRWTLVNENRPIWTRPIGNVTEEEYHTFYKAFSGDYRDPLYFNHFKVEGEVDFDSILFVPTTVDPASFSDDNSVPNTNIKLYVRRVFITDEFRDLLPRYLNFVKGIVDSNDLPLNVSREVLQESRILRVIKKKLVRKTLSMFADIAAQDEAIANGKQVESPAPSGHTHLKKPAYTKFWELYGKHLRLGVMLDSNNRNRLTKLFRYKSSRSESEYISLQTYVDRMKKGQKGIYYLSGDSVARIKKSPVLEDAVNHDVEVIFMTDAIDEYVVSQLTDFAGKKLINLAKEGVQLEESDARQRVADRKRKEKYDSFFTHLRALFGYSEVRKVILTKRMTNEAFLVSSGENQITARLASIMRGQSMSLANQQMTAERVLEVNYRHPLVDEMFKRFTVDEDDEVATDIAWVLYDTANLQAEFPVADVAAYSKRINRLLRSSVDLSADDSLLPPDDAEYTVSDTEAEEEEEQPKVDANADEEAEAVGEDDL.

The signal sequence occupies residues Met-1–Ala-24. 3 residues coordinate ATP: Asn-63, Asp-109, and Phe-160. Asn-63 carries an N-linked (GlcNAc...) asparagine glycan. Residues Thr-253–Gln-282 are disordered. Over residues Ala-260–Lys-277 the composition is skewed to acidic residues. Residues Asn-306 and Asn-402 are each glycosylated (N-linked (GlcNAc...) asparagine). The disordered stretch occupies residues Ala-727–Leu-771. Over residues Asn-758–Leu-771 the composition is skewed to acidic residues. The Prevents secretion from ER motif lies at Glu-768–Leu-771.

Belongs to the heat shock protein 90 family. Homotetramer.

It is found in the endoplasmic reticulum. Molecular chaperone that functions in the processing and transport of secreted proteins. Required for the synthesis of lipophosphoglycan (LPG), a cell surface glycoconjugate. Necessary for the attachment of the galactosyl residue to the mannose within the phosphoglycan repeats of the nascent LPG chain. Also required for addition of phosphoglycan to acid phosphatase. Not required for normal growth. Has ATPase activity. Binds heparin with micromolar affinity which may facilitate infection of host cells. The sequence is that of Endoplasmin homolog from Leishmania infantum.